The sequence spans 670 residues: Methionine--tRNA ligase (670 aa).

Positions 14–24 match the 'HIGH' region motif; it reads PYANGHLHLGH. Positions 145, 148, 158, and 161 each coordinate Zn(2+). Positions 330–334 match the 'KMSKS' region motif; that stretch reads KMSKS. K333 contributes to the ATP binding site. Positions 570–670 constitute a tRNA-binding domain; that stretch reads DFAKVDLRIA…AGAFPGMKVK (101 aa).

It belongs to the class-I aminoacyl-tRNA synthetase family. MetG type 1 subfamily. As to quaternary structure, homodimer. It depends on Zn(2+) as a cofactor.

The protein localises to the cytoplasm. It carries out the reaction tRNA(Met) + L-methionine + ATP = L-methionyl-tRNA(Met) + AMP + diphosphate. Its function is as follows. Is required not only for elongation of protein synthesis but also for the initiation of all mRNA translation through initiator tRNA(fMet) aminoacylation. The chain is Methionine--tRNA ligase from Legionella pneumophila (strain Corby).